The following is a 454-amino-acid chain: Protein disulfide-isomerase TMX3 (454 aa).

The N-terminal stretch at 1 to 24 (MAAWKSWTALRLCATVVVLDMVVC) is a signal peptide. The region spanning 25 to 128 (KGFVEDLDES…KDDIIEFAHR (104 aa)) is the Thioredoxin domain. Residues 25 to 375 (KGFVEDLDES…TIVSIFKSSP (351 aa)) are Lumenal-facing. Residues Cys53 and Cys56 each act as nucleophile in the active site. A disulfide bridge connects residues Cys53 and Cys56. 2 N-linked (GlcNAc...) asparagine glycosylation sites follow: Asn258 and Asn313. The helical transmembrane segment at 376–396 (LMGCFLFGLPLGVISIMCYGI) threads the bilayer. Residues 397–454 (YTADTDGGYIEERYEVSKSENENQEQIEESKEQQEPSSGGSVVPTVQEPKDVLEKKKD) lie on the Cytoplasmic side of the membrane. Positions 412–454 (VSKSENENQEQIEESKEQQEPSSGGSVVPTVQEPKDVLEKKKD) are disordered. The span at 444–454 (EPKDVLEKKKD) shows a compositional bias: basic and acidic residues. The short motif at 451 to 454 (KKKD) is the Di-lysine motif element.

It belongs to the protein disulfide isomerase family. N-glycosylated. Widely expressed. Expressed in brain, testis, lung, skin, kidney, uterus, bone, stomach, liver, prostate, placenta, eye and muscle.

The protein localises to the endoplasmic reticulum membrane. It catalyses the reaction Catalyzes the rearrangement of -S-S- bonds in proteins.. Probable disulfide isomerase, which participates in the folding of proteins containing disulfide bonds. May act as a dithiol oxidase. Acts as a regulator of endoplasmic reticulum-mitochondria contact sites via its ability to regulate redox signals. This Homo sapiens (Human) protein is Protein disulfide-isomerase TMX3 (TMX3).